Reading from the N-terminus, the 75-residue chain is U6-lycotoxin-Ls1h (75 aa).

Residues 1 to 21 form the signal peptide; that stretch reads MKLLLFTALVLVVISLIEVEA. Residues 22-25 constitute a propeptide that is removed on maturation; that stretch reads ENER.

It belongs to the neurotoxin 19 (CSTX) family. 06 (U6-Lctx) subfamily. Contains 4 disulfide bonds. Expressed by the venom gland.

The protein resides in the secreted. The polypeptide is U6-lycotoxin-Ls1h (Lycosa singoriensis (Wolf spider)).